A 154-amino-acid polypeptide reads, in one-letter code: Crossover junction endodeoxyribonuclease RuvC (154 aa).

Catalysis depends on residues D7, E67, and D139. D7, E67, and D139 together coordinate Mg(2+).

The protein belongs to the RuvC family. Homodimer which binds Holliday junction (HJ) DNA. The HJ becomes 2-fold symmetrical on binding to RuvC with unstacked arms; it has a different conformation from HJ DNA in complex with RuvA. In the full resolvosome a probable DNA-RuvA(4)-RuvB(12)-RuvC(2) complex forms which resolves the HJ. Requires Mg(2+) as cofactor.

It is found in the cytoplasm. It carries out the reaction Endonucleolytic cleavage at a junction such as a reciprocal single-stranded crossover between two homologous DNA duplexes (Holliday junction).. Its function is as follows. The RuvA-RuvB-RuvC complex processes Holliday junction (HJ) DNA during genetic recombination and DNA repair. Endonuclease that resolves HJ intermediates. Cleaves cruciform DNA by making single-stranded nicks across the HJ at symmetrical positions within the homologous arms, yielding a 5'-phosphate and a 3'-hydroxyl group; requires a central core of homology in the junction. The consensus cleavage sequence is 5'-(A/T)TT(C/G)-3'. Cleavage occurs on the 3'-side of the TT dinucleotide at the point of strand exchange. HJ branch migration catalyzed by RuvA-RuvB allows RuvC to scan DNA until it finds its consensus sequence, where it cleaves and resolves the cruciform DNA. The protein is Crossover junction endodeoxyribonuclease RuvC of Synechococcus sp. (strain WH7803).